A 406-amino-acid polypeptide reads, in one-letter code: Autotransporter heptosyltransferase TibC (406 aa).

Thr107, Leu108, and Gly109 together coordinate ADP-D-glycero-beta-D-manno-heptose. Catalysis depends on Asp110, which acts as the Proton acceptor. Gln224, Thr226, Lys230, Arg257, Leu281, Gly302, and Glu326 together coordinate ADP-D-glycero-beta-D-manno-heptose. The Fe(3+) site is built by Cys339, Cys342, Cys358, and Cys370.

Belongs to the glycosyltransferase 9 family. In terms of assembly, homododecamer composed of 6 homodimers forming a ring. The cofactor is Fe(3+).

The enzyme catalyses ADP-D-glycero-beta-D-manno-heptose + L-seryl-[protein] = O-(D-glycero-alpha-D-manno-heptosyl)-L-seryl-[protein] + ADP + H(+). Glycosylates adhesin TibA. Specifically adds anomer D-glycero-beta-D-manno-heptose. Cannot use ADP-L-glycero-beta-D-manno-heptose as a sugar donor. The protein is Autotransporter heptosyltransferase TibC of Escherichia coli O78:H11 (strain H10407 / ETEC).